A 341-amino-acid chain; its full sequence is Guanine nucleotide-binding protein subunit beta (341 aa).

WD repeat units lie at residues 54–84 (GHLA…IVWD), 96–126 (LRSS…SIYS), 142–171 (GHTG…ALWN), 183–213 (GHTG…KLFD), 225–255 (GHES…RLFD), 269–299 (NIIC…NVWD), and 311–341 (GHDN…KIWN).

It belongs to the WD repeat G protein beta family. As to quaternary structure, g proteins are composed of 3 units, alpha, beta and gamma.

Guanine nucleotide-binding proteins (G proteins) are involved as a modulator or transducer in various transmembrane signaling systems. The beta and gamma chains are required for the GTPase activity, for replacement of GDP by GTP, and for G protein-effector interaction. In Loligo forbesii (Veined squid), this protein is Guanine nucleotide-binding protein subunit beta.